The sequence spans 544 residues: CTP synthase (544 aa).

An amidoligase domain region spans residues 1 to 265; that stretch reads MARFIFITGG…DEAVLSAFGI (265 aa). Serine 13 contributes to the CTP binding site. UTP is bound at residue serine 13. Position 14–19 (14–19) interacts with ATP; sequence SLGKGL. Tyrosine 54 is a binding site for L-glutamine. Position 71 (aspartate 71) interacts with ATP. Mg(2+)-binding residues include aspartate 71 and glutamate 139. CTP is bound by residues 146–148, 186–191, and lysine 222; these read DIE and KTKPTQ. UTP contacts are provided by residues 186 to 191 and lysine 222; that span reads KTKPTQ. One can recognise a Glutamine amidotransferase type-1 domain in the interval 291 to 543; the sequence is TIGVVGKYVG…IAAALQQSRL (253 aa). Glycine 355 is an L-glutamine binding site. The Nucleophile; for glutamine hydrolysis role is filled by cysteine 382. L-glutamine contacts are provided by residues 383–386, glutamate 406, and arginine 471; that span reads LGMQ. Active-site residues include histidine 516 and glutamate 518.

It belongs to the CTP synthase family. As to quaternary structure, homotetramer.

The enzyme catalyses UTP + L-glutamine + ATP + H2O = CTP + L-glutamate + ADP + phosphate + 2 H(+). It carries out the reaction L-glutamine + H2O = L-glutamate + NH4(+). The catalysed reaction is UTP + NH4(+) + ATP = CTP + ADP + phosphate + 2 H(+). Its pathway is pyrimidine metabolism; CTP biosynthesis via de novo pathway; CTP from UDP: step 2/2. Allosterically activated by GTP, when glutamine is the substrate; GTP has no effect on the reaction when ammonia is the substrate. The allosteric effector GTP functions by stabilizing the protein conformation that binds the tetrahedral intermediate(s) formed during glutamine hydrolysis. Inhibited by the product CTP, via allosteric rather than competitive inhibition. Catalyzes the ATP-dependent amination of UTP to CTP with either L-glutamine or ammonia as the source of nitrogen. Regulates intracellular CTP levels through interactions with the four ribonucleotide triphosphates. The chain is CTP synthase from Rhizorhabdus wittichii (strain DSM 6014 / CCUG 31198 / JCM 15750 / NBRC 105917 / EY 4224 / RW1) (Sphingomonas wittichii).